Reading from the N-terminus, the 441-residue chain is GTPase Der (441 aa).

2 EngA-type G domains span residues 2–164 (QKVA…PADE) and 173–343 (IRIS…EKWQ). GTP contacts are provided by residues 8 to 15 (GRPNVGKS), 55 to 59 (DTGGL), 116 to 119 (NKID), 179 to 186 (GRPNVGKS), 226 to 230 (DTAGI), and 288 to 291 (NKWD). One can recognise a KH-like domain in the interval 344–428 (SRIPTAELNR…PVRLKWKEKG (85 aa)).

Belongs to the TRAFAC class TrmE-Era-EngA-EngB-Septin-like GTPase superfamily. EngA (Der) GTPase family. As to quaternary structure, associates with the 50S ribosomal subunit.

GTPase that plays an essential role in the late steps of ribosome biogenesis. This chain is GTPase Der, found in Deinococcus geothermalis (strain DSM 11300 / CIP 105573 / AG-3a).